A 946-amino-acid polypeptide reads, in one-letter code: Protein translocase subunit SecA (946 aa).

ATP-binding positions include Q89, G107–T111, and D508. A disordered region spans residues P534–S569. The span at R546–S569 shows a compositional bias: basic and acidic residues.

It belongs to the SecA family. As to quaternary structure, monomer and homodimer. Part of the essential Sec protein translocation apparatus which comprises SecA, SecYEG and auxiliary proteins SecDF. Other proteins may also be involved.

The protein localises to the cell inner membrane. It localises to the cellular thylakoid membrane. Its subcellular location is the cytoplasm. The catalysed reaction is ATP + H2O + cellular proteinSide 1 = ADP + phosphate + cellular proteinSide 2.. Functionally, part of the Sec protein translocase complex. Interacts with the SecYEG preprotein conducting channel. Has a central role in coupling the hydrolysis of ATP to the transfer of proteins into and across the cell membrane, serving as an ATP-driven molecular motor driving the stepwise translocation of polypeptide chains across the membrane. In terms of biological role, probably participates in protein translocation into and across both the cytoplasmic and thylakoid membranes in cyanobacterial cells. The chain is Protein translocase subunit SecA from Prochlorococcus marinus (strain SARG / CCMP1375 / SS120).